The primary structure comprises 208 residues: 3-demethoxyubiquinol 3-hydroxylase (208 aa).

Fe cation is bound by residues Glu57, Glu87, His90, Glu139, Glu171, and His174.

The protein belongs to the COQ7 family. Requires Fe cation as cofactor.

It localises to the cell membrane. The catalysed reaction is a 5-methoxy-2-methyl-3-(all-trans-polyprenyl)benzene-1,4-diol + AH2 + O2 = a 3-demethylubiquinol + A + H2O. Its pathway is cofactor biosynthesis; ubiquinone biosynthesis. Functionally, catalyzes the hydroxylation of 2-nonaprenyl-3-methyl-6-methoxy-1,4-benzoquinol during ubiquinone biosynthesis. The polypeptide is 3-demethoxyubiquinol 3-hydroxylase (Burkholderia vietnamiensis (strain G4 / LMG 22486) (Burkholderia cepacia (strain R1808))).